We begin with the raw amino-acid sequence, 555 residues long: Sulfite reductase [ferredoxin] (555 aa).

Positions 1 to 22 are disordered; the sequence is MTTARPAKARNEGQWALGHREP. The segment at residues 69 to 161 is a cross-link (3'-(S-cysteinyl)-tyrosine (Tyr-Cys)); it reads YTQREQGYDG…DVGLQTTEAC (93 aa). [4Fe-4S] cluster contacts are provided by cysteine 417, cysteine 423, cysteine 463, and cysteine 467. Cysteine 467 lines the siroheme pocket.

Belongs to the nitrite and sulfite reductase 4Fe-4S domain family. As to quaternary structure, monomer. It depends on siroheme as a cofactor. The cofactor is [4Fe-4S] cluster.

The catalysed reaction is hydrogen sulfide + 6 oxidized [2Fe-2S]-[ferredoxin] + 3 H2O = sulfite + 6 reduced [2Fe-2S]-[ferredoxin] + 7 H(+). Functionally, catalyzes the reduction of sulfite to sulfide, a step in the biosynthesis of sulfur-containing amino acids and cofactors. The polypeptide is Sulfite reductase [ferredoxin] (sir) (Mycobacterium bovis (strain ATCC BAA-935 / AF2122/97)).